The chain runs to 501 residues: Ammonium transporter 2 member 2 (501 aa).

11 consecutive transmembrane segments (helical) span residues 35-55 (VAATFVGIQSMPGLVVIYGSI), 64-84 (SAFMALYAYASTLIVWVLVGF), 140-160 (LVLFEFEFAAITLVLLAGSLL), 174-194 (LWLLFSYTVGAFSLWGGGFLY), 203-223 (GGYVIHLSSGVAGFTAAYWVG), 238-258 (ILLMIAGGGLLWLGWAGFNGG), 274-294 (TNVSAATSLLTWTCLDVIFFG), 298-318 (VIGAVQGMMTGLVCITPGAGL), 322-342 (WSAMLMGMFAGSVPWFTMMIL), 356-376 (LAVFHTHAVAGILGGVLTGLL), and 412-432 (FVTVWNLIVTSAILLCIGLFI).

This sequence belongs to the ammonia transporter channel (TC 1.A.11.2) family.

It is found in the membrane. In terms of biological role, involved in ammonium transport. This Oryza sativa subsp. japonica (Rice) protein is Ammonium transporter 2 member 2 (AMT2-2).